Reading from the N-terminus, the 406-residue chain is uncharacterized protein (406 aa).

This is an uncharacterized protein from Aquifex aeolicus (strain VF5).